Here is a 256-residue protein sequence, read N- to C-terminus: Probable transcriptional regulatory protein cce_0894 (256 aa).

This sequence belongs to the TACO1 family.

It is found in the cytoplasm. The sequence is that of Probable transcriptional regulatory protein cce_0894 from Crocosphaera subtropica (strain ATCC 51142 / BH68) (Cyanothece sp. (strain ATCC 51142)).